We begin with the raw amino-acid sequence, 175 residues long: Inorganic pyrophosphatase 1 (175 aa).

Lysine 30, arginine 44, and tyrosine 56 together coordinate substrate. Mg(2+)-binding residues include aspartate 66, aspartate 71, and aspartate 103. Tyrosine 142 contacts substrate.

It belongs to the PPase family. In terms of assembly, homohexamer. The cofactor is Mg(2+).

It localises to the cytoplasm. The enzyme catalyses diphosphate + H2O = 2 phosphate + H(+). Its function is as follows. Catalyzes the hydrolysis of inorganic pyrophosphate (PPi) forming two phosphate ions. The polypeptide is Inorganic pyrophosphatase 1 (Pseudomonas syringae pv. tomato (strain ATCC BAA-871 / DC3000)).